The sequence spans 292 residues: Elongation factor Ts (292 aa).

Positions 79-82 (TDFV) are involved in Mg(2+) ion dislocation from EF-Tu.

This sequence belongs to the EF-Ts family.

It is found in the cytoplasm. Functionally, associates with the EF-Tu.GDP complex and induces the exchange of GDP to GTP. It remains bound to the aminoacyl-tRNA.EF-Tu.GTP complex up to the GTP hydrolysis stage on the ribosome. This is Elongation factor Ts from Xanthomonas campestris pv. campestris (strain B100).